A 742-amino-acid chain; its full sequence is Catalase-peroxidase (742 aa).

The tract at residues 1–43 (MSDSCPVAHEGNTQSTSESENPVIPSPTPAANRPRNNRDWWPN) is disordered. Polar residues predominate over residues 11–20 (GNTQSTSESE). The tryptophyl-tyrosyl-methioninium (Trp-Tyr) (with M-257) cross-link spans 109 to 231 (WHAAGTYRIA…LGAVQMGLIY (123 aa)). The Proton acceptor role is filled by histidine 110. Positions 231–257 (YVNPEGPNGQPDPLAAARDIRETFSRM) form a cross-link, tryptophyl-tyrosyl-methioninium (Tyr-Met) (with W-109). Histidine 272 is a binding site for heme b.

This sequence belongs to the peroxidase family. Peroxidase/catalase subfamily. As to quaternary structure, homodimer or homotetramer. It depends on heme b as a cofactor. Post-translationally, formation of the three residue Trp-Tyr-Met cross-link is important for the catalase, but not the peroxidase activity of the enzyme.

It carries out the reaction H2O2 + AH2 = A + 2 H2O. The catalysed reaction is 2 H2O2 = O2 + 2 H2O. Functionally, bifunctional enzyme with both catalase and broad-spectrum peroxidase activity. The chain is Catalase-peroxidase from Rhodococcus jostii (strain RHA1).